A 417-amino-acid polypeptide reads, in one-letter code: NADH-quinone oxidoreductase subunit D 2 (417 aa).

Belongs to the complex I 49 kDa subunit family. As to quaternary structure, NDH-1 is composed of 14 different subunits. Subunits NuoB, C, D, E, F, and G constitute the peripheral sector of the complex.

Its subcellular location is the cell membrane. It carries out the reaction a quinone + NADH + 5 H(+)(in) = a quinol + NAD(+) + 4 H(+)(out). In terms of biological role, NDH-1 shuttles electrons from NADH, via FMN and iron-sulfur (Fe-S) centers, to quinones in the respiratory chain. The immediate electron acceptor for the enzyme in this species is believed to be ubiquinone. Couples the redox reaction to proton translocation (for every two electrons transferred, four hydrogen ions are translocated across the cytoplasmic membrane), and thus conserves the redox energy in a proton gradient. The sequence is that of NADH-quinone oxidoreductase subunit D 2 from Roseiflexus sp. (strain RS-1).